The sequence spans 615 residues: DNA mismatch repair protein MutL (615 aa).

Residues 363–397 (FAEPAAREPVAPRYTPAPASGSRPAAPWPNAQPGY) form a disordered region. Residues 364–391 (AEPAAREPVAPRYTPAPASGSRPAAPWP) are compositionally biased toward low complexity.

The protein belongs to the DNA mismatch repair MutL/HexB family.

Functionally, this protein is involved in the repair of mismatches in DNA. It is required for dam-dependent methyl-directed DNA mismatch repair. May act as a 'molecular matchmaker', a protein that promotes the formation of a stable complex between two or more DNA-binding proteins in an ATP-dependent manner without itself being part of a final effector complex. This Escherichia coli O8 (strain IAI1) protein is DNA mismatch repair protein MutL.